A 331-amino-acid polypeptide reads, in one-letter code: Flagellar P-ring protein (331 aa).

The signal sequence occupies residues 1–22 (MRKVTIFIIIIVALTGFGSVRI).

This sequence belongs to the FlgI family. As to quaternary structure, the basal body constitutes a major portion of the flagellar organelle and consists of four rings (L,P,S, and M) mounted on a central rod.

It is found in the periplasm. Its subcellular location is the bacterial flagellum basal body. Functionally, assembles around the rod to form the L-ring and probably protects the motor/basal body from shearing forces during rotation. This chain is Flagellar P-ring protein, found in Pseudothermotoga lettingae (strain ATCC BAA-301 / DSM 14385 / NBRC 107922 / TMO) (Thermotoga lettingae).